The sequence spans 380 residues: Cystathionine gamma-synthase (380 aa).

K195 bears the N6-(pyridoxal phosphate)lysine mark.

It belongs to the trans-sulfuration enzymes family. As to quaternary structure, homotetramer. It depends on pyridoxal 5'-phosphate as a cofactor.

Its subcellular location is the cytoplasm. It carries out the reaction O-succinyl-L-homoserine + L-cysteine = L,L-cystathionine + succinate + H(+). In terms of biological role, catalyzes the formation of L-cystathionine from O-succinyl-L-homoserine (OSHS) and L-cysteine, via a gamma-replacement reaction. In the absence of thiol, catalyzes gamma-elimination to form 2-oxobutanoate, succinate and ammonia. This is Cystathionine gamma-synthase (metB) from Helicobacter pylori (strain ATCC 700392 / 26695) (Campylobacter pylori).